The following is a 147-amino-acid chain: Hemoglobin subunit beta (147 aa).

The residue at position 2 (V2) is an N-acetylvaline. Residues 3 to 147 form the Globin domain; that stretch reads HLADDEKAAV…VSTALAHKYH (145 aa). Position 45 is a phosphoserine (S45). K60 bears the N6-acetyllysine mark. H64 contributes to the heme b binding site. K83 bears the N6-acetyllysine mark. H93 provides a ligand contact to heme b. C94 carries the post-translational modification S-nitrosocysteine. K145 carries the post-translational modification N6-acetyllysine.

The protein belongs to the globin family. As to quaternary structure, heterotetramer of two alpha chains and two beta chains. Red blood cells.

Involved in oxygen transport from the lung to the various peripheral tissues. In Bradypus tridactylus (Pale-throated three-toed sloth), this protein is Hemoglobin subunit beta (HBB).